The sequence spans 156 residues: Fibroblast growth factor 2 (156 aa).

The propeptide occupies 1 to 9 (MAAGSITTL). N37 contributes to the heparin binding site. Y83 carries the post-translational modification Phosphotyrosine; by TEC. K96 is covalently cross-linked (Glycyl lysine isopeptide (Lys-Gly) (interchain with G-Cter in SUMO1)). The interval 129–145 (KRTGQYKLGSKTGPGQK) is heparin-binding.

It belongs to the heparin-binding growth factors family. In terms of assembly, monomer. Homodimer. Interacts with FGFR1, FGFR2, FGFR3 and FGFR4. Affinity between fibroblast growth factors (FGFs) and their receptors is increased by heparan sulfate glycosaminoglycans that function as coreceptors. Interacts with CSPG4, FGFBP1 and TEC. Found in a complex with FGFBP1, FGF1 and FGF2. Interacts with FGFBP3. Interacts with integrin ITGAV:ITGB3; the interaction is required for FGF2 signaling. Interacts with SNORC (via the extracellular domain). Interacts with glypican GPC3. In terms of processing, phosphorylation at Tyr-83 regulates FGF2 unconventional secretion.

It localises to the secreted. The protein resides in the nucleus. Functionally, acts as a ligand for FGFR1, FGFR2, FGFR3 and FGFR4. Also acts as an integrin ligand which is required for FGF2 signaling. Binds to integrin ITGAV:ITGB3. Plays an important role in the regulation of cell survival, cell division, cell differentiation and cell migration. Functions as a potent mitogen in vitro. Can induce angiogenesis. Mediates phosphorylation of ERK1/2 and thereby promotes retinal lens fiber differentiation. The polypeptide is Fibroblast growth factor 2 (FGF2) (Monodelphis domestica (Gray short-tailed opossum)).